The primary structure comprises 480 residues: Cytochrome b-c1 complex subunit 1, mitochondrial (480 aa).

The N-terminal 34 residues, 1-34, are a transit peptide targeting the mitochondrion; it reads MAASAVCRAACSGTQVLLRTRRSPALLRLPALRG. Lys111 and Lys138 each carry N6-acetyllysine. Position 163 is an N6-acetyllysine; alternate (Lys163). At Lys163 the chain carries N6-succinyllysine; alternate. Ser212 is subject to Phosphoserine. Thr214 bears the Phosphothreonine mark. Residue Lys248 is modified to N6-acetyllysine.

It belongs to the peptidase M16 family. UQCRC1/QCR1 subfamily. In terms of assembly, component of the ubiquinol-cytochrome c oxidoreductase (cytochrome b-c1 complex, complex III, CIII), a multisubunit enzyme composed of 11 subunits. The complex is composed of 3 respiratory subunits cytochrome b, cytochrome c1 and Rieske protein UQCRFS1, 2 core protein subunits UQCRC1/QCR1 and UQCRC2/QCR2, and 6 low-molecular weight protein subunits UQCRH/QCR6, UQCRB/QCR7, UQCRQ/QCR8, UQCR10/QCR9, UQCR11/QCR10 and subunit 9, the cleavage product of Rieske protein UQCRFS1. The complex exists as an obligatory dimer and forms supercomplexes (SCs) in the inner mitochondrial membrane with NADH-ubiquinone oxidoreductase (complex I, CI) and cytochrome c oxidase (complex IV, CIV), resulting in different assemblies (supercomplex SCI(1)III(2)IV(1) and megacomplex MCI(2)III(2)IV(2)). Interacts with UQCC6. Interacts with STMP1. Acetylation of Lys-138 is observed in liver mitochondria from fasted mice but not from fed mice. In terms of tissue distribution, expressed in neurons and astrocytes of the cerebral cortex and hippocampus (at protein level).

The protein localises to the mitochondrion inner membrane. Functionally, component of the ubiquinol-cytochrome c oxidoreductase, a multisubunit transmembrane complex that is part of the mitochondrial electron transport chain which drives oxidative phosphorylation. The respiratory chain contains 3 multisubunit complexes succinate dehydrogenase (complex II, CII), ubiquinol-cytochrome c oxidoreductase (cytochrome b-c1 complex, complex III, CIII) and cytochrome c oxidase (complex IV, CIV), that cooperate to transfer electrons derived from NADH and succinate to molecular oxygen, creating an electrochemical gradient over the inner membrane that drives transmembrane transport and the ATP synthase. The cytochrome b-c1 complex catalyzes electron transfer from ubiquinol to cytochrome c, linking this redox reaction to translocation of protons across the mitochondrial inner membrane, with protons being carried across the membrane as hydrogens on the quinol. In the process called Q cycle, 2 protons are consumed from the matrix, 4 protons are released into the intermembrane space and 2 electrons are passed to cytochrome c. The 2 core subunits UQCRC1/QCR1 and UQCRC2/QCR2 are homologous to the 2 mitochondrial-processing peptidase (MPP) subunits beta-MPP and alpha-MPP respectively, and they seem to have preserved their MPP processing properties. May be involved in the in situ processing of UQCRFS1 into the mature Rieske protein and its mitochondrial targeting sequence (MTS)/subunit 9 when incorporated into complex III. Seems to play an important role in the maintenance of proper mitochondrial function in nigral dopaminergic neurons. In Mus musculus (Mouse), this protein is Cytochrome b-c1 complex subunit 1, mitochondrial (Uqcrc1).